We begin with the raw amino-acid sequence, 353 residues long: DNA integrity scanning protein DisA (353 aa).

The DAC domain maps to 6-144 (DKELMNILKI…GGIKYVLRDS (139 aa)). ATP-binding positions include Gly-73, Leu-91, and 104-108 (TRHRT).

Belongs to the DisA family. In terms of assembly, homooctamer. Mg(2+) is required as a cofactor.

The catalysed reaction is 2 ATP = 3',3'-c-di-AMP + 2 diphosphate. Functionally, participates in a DNA-damage check-point that is active prior to asymmetric division when DNA is damaged. DisA forms globular foci that rapidly scan along the chromosomes during sporulation, searching for lesions. When a lesion is present, DisA pauses at the lesion site. This triggers a cellular response that culminates in a temporary block in sporulation initiation. Also has diadenylate cyclase activity, catalyzing the condensation of 2 ATP molecules into cyclic di-AMP (c-di-AMP). c-di-AMP acts as a signaling molecule that couples DNA integrity with progression of sporulation. The rise in c-di-AMP level generated by DisA while scanning the chromosome, operates as a positive signal that advances sporulation; upon encountering a lesion, the DisA focus arrests at the damaged site and halts c-di-AMP synthesis. This Clostridium botulinum (strain Kyoto / Type A2) protein is DNA integrity scanning protein DisA.